Here is a 108-residue protein sequence, read N- to C-terminus: Anti-sigma-B factor antagonist (108 aa).

Residues 3-108 (LNIETTTQDK…MHVNEGTEVE (106 aa)) enclose the STAS domain. Position 57 is a phosphoserine (Ser-57).

Belongs to the anti-sigma-factor antagonist family. Post-translationally, phosphorylated by RsbW on a serine residue.

Positive regulator of sigma-B activity. Non-phosphorylated RsbV binds to RsbW, preventing its association with sigma-B. When phosphorylated, releases RsbW, which is then free to complex with and inactivate sigma-B. This Staphylococcus aureus (strain NCTC 8325 / PS 47) protein is Anti-sigma-B factor antagonist (rsbV).